We begin with the raw amino-acid sequence, 305 residues long: Hepatitis A virus cellular receptor 1 homolog (305 aa).

Residues 1–21 (MNQIQVFISGLILLLPGAVDS) form the signal peptide. Residues 22–122 (YVEVKGVVGH…PGWFNDQKVT (101 aa)) enclose the Ig-like V-type domain. Residues 22 to 237 (YVEVKGVVGH…GKPQKNPTKG (216 aa)) lie on the Extracellular side of the membrane. 3 cysteine pairs are disulfide-bonded: Cys37–Cys108, Cys49–Cys60, and Cys55–Cys107. Positions 129–185 (PEIPTRPPTRPTTTRPTATGRPTTISTRSTHVPTSIRVSTSTPPTSTHTWTHKPEPT) are disordered. Composition is skewed to low complexity over residues 139–152 (PTTTRPTATGRPTT) and 161–177 (PTSIRVSTSTPPTSTHT). Asn208 carries an N-linked (GlcNAc...) asparagine glycan. Residues 238–258 (FYVGICIAALLLLLLVSTVAI) form a helical membrane-spanning segment. Residues 259–305 (TRYILMKRKSASLSVVAFRVSKIEALQNAAVVHSRAEDNIYIVEDRP) are Cytoplasmic-facing.

The protein belongs to the immunoglobulin superfamily. TIM family. As to quaternary structure, interacts with STAM. Interacts with SELPLG. As to expression, expressed by stimulated T-cells. Expressed during primary antigen stimulation. Expressed at higher levels on B rather than T-cells, both constitutively and after activation.

Its subcellular location is the cell membrane. Phosphatidylserine receptor that plays an important functional role in regulatory B-cells homeostasis including generation, expansion and suppressor functions. As P-selectin/SELPLG ligand, plays a specialized role in activated but not naive T-cell trafficking during inflammatory responses. Controls thereby T-cell accumulation in the inflamed central nervous system (CNS) and the induction of autoimmune disease. Also regulates expression of various anti-inflammatory cytokines and co-inhibitory ligands including IL10. Acts as a regulator of T-cell proliferation. May play a role in kidney injury and repair. In Mus musculus (Mouse), this protein is Hepatitis A virus cellular receptor 1 homolog (Havcr1).